The primary structure comprises 256 residues: MDIFNAIILGIIEGITEFLPISSTGHIIVAAQWLGIEATATNQAFGVIIQLAAILAVLANYKDKFTPKHLNLWIKVAIAFIPLGIIAFIFSDVIKALFNVPVVGVMFIVGGVIFLLLERNYKEQNCTTTDVTQVTYKQAIWIGIAQVFALIPGTSRAGSSIVGAMLCGLNRKASAEFSFLLGLPVLAAASGYDLLKHYDLFTFDDLTALAVGFVTSFIVAYFTIKLFIRFLENFTFVSFGIYRIVFGVILLTIAYV.

Transmembrane regions (helical) follow at residues 1–21 (MDIF…FLPI), 38–58 (ATAT…LAVL), 70–90 (LNLW…AFIF), 97–117 (LFNV…FLLL), 134–154 (VTYK…IPGT), 175–195 (AEFS…YDLL), 208–228 (ALAV…KLFI), and 236–256 (FVSF…IAYV).

This sequence belongs to the UppP family.

Its subcellular location is the cell inner membrane. The enzyme catalyses di-trans,octa-cis-undecaprenyl diphosphate + H2O = di-trans,octa-cis-undecaprenyl phosphate + phosphate + H(+). Catalyzes the dephosphorylation of undecaprenyl diphosphate (UPP). Confers resistance to bacitracin. This is Undecaprenyl-diphosphatase 2 from Pseudoalteromonas translucida (strain TAC 125).